The sequence spans 196 residues: MSSIKLIVGLANPGAEYAQTRHNAGAWYVDLLAQRHNQQLKEESKFYGYTARLNLAGNDVRLLVPTTFMNLSGKAVLAMANFYRIEPDEILVAHDELDIPPGVAKIKLGGGNGGHNGLKDIQSKFGNNPNFYRLRIGIGHPGDKNKVVGFVLGKPPASEQKMIDEAIDEAARCTEILLTDGLEKTVRRLHSFKAQA.

Tyr17 provides a ligand contact to tRNA. His22 acts as the Proton acceptor in catalysis. TRNA contacts are provided by Phe68, Asn70, and Asn116.

This sequence belongs to the PTH family. In terms of assembly, monomer.

The protein resides in the cytoplasm. The catalysed reaction is an N-acyl-L-alpha-aminoacyl-tRNA + H2O = an N-acyl-L-amino acid + a tRNA + H(+). Hydrolyzes ribosome-free peptidyl-tRNAs (with 1 or more amino acids incorporated), which drop off the ribosome during protein synthesis, or as a result of ribosome stalling. In terms of biological role, catalyzes the release of premature peptidyl moieties from peptidyl-tRNA molecules trapped in stalled 50S ribosomal subunits, and thus maintains levels of free tRNAs and 50S ribosomes. This chain is Peptidyl-tRNA hydrolase, found in Serratia proteamaculans (strain 568).